Reading from the N-terminus, the 78-residue chain is Nucleocapsid VP1 (78 aa).

As to quaternary structure, homodimer.

Its subcellular location is the virion. Completely wraps the viral circular dsDNA genome to form a nucleoprotein filament. These interactions between the viral genome and the nucleocapsid proteins probably maintain the DNA in A-form. This certainly protects the viral DNA under conditions such as the extreme desiccation of its host. The protein is Nucleocapsid VP1 of Sulfolobus (SPV1).